The following is a 216-amino-acid chain: Serine acetyltransferase (216 aa).

Belongs to the transferase hexapeptide repeat family.

It localises to the cytoplasm. It catalyses the reaction L-serine + acetyl-CoA = O-acetyl-L-serine + CoA. The protein operates within amino-acid biosynthesis; L-cysteine biosynthesis; L-cysteine from L-serine: step 1/2. With respect to regulation, inhibited by cysteine. Catalyzes the acetylation of serine by acetyl-CoA to produce O-acetylserine (OAS). The sequence is that of Serine acetyltransferase from Bacillus licheniformis (strain ATCC 14580 / DSM 13 / JCM 2505 / CCUG 7422 / NBRC 12200 / NCIMB 9375 / NCTC 10341 / NRRL NRS-1264 / Gibson 46).